Consider the following 165-residue polypeptide: Thiol peroxidase (165 aa).

The Thioredoxin domain occupies 18-164; that stretch reads RKVGDKAPNF…YEAAIEAAKK (147 aa). Catalysis depends on Cys60, which acts as the Cysteine sulfenic acid (-SOH) intermediate. Cys60 and Cys94 are joined by a disulfide.

Belongs to the peroxiredoxin family. Tpx subfamily. Homodimer.

The enzyme catalyses a hydroperoxide + [thioredoxin]-dithiol = an alcohol + [thioredoxin]-disulfide + H2O. Its function is as follows. Thiol-specific peroxidase that catalyzes the reduction of hydrogen peroxide and organic hydroperoxides to water and alcohols, respectively. Plays a role in cell protection against oxidative stress by detoxifying peroxides. In Listeria monocytogenes serovar 1/2a (strain ATCC BAA-679 / EGD-e), this protein is Thiol peroxidase.